The sequence spans 149 residues: uncharacterized protein (149 aa).

Residues 1–15 (MQRQTGHMEDKKRTG) are compositionally biased toward basic and acidic residues. Residues 1–32 (MQRQTGHMEDKKRTGLESQGTENAFSDGRDGK) form a disordered region.

This is an uncharacterized protein from Gallus gallus (Chicken).